The chain runs to 367 residues: Diphthine methyltransferase homolog (367 aa).

4 WD repeats span residues 84–124 (NFNS…KKLE), 132–173 (SLSN…SKVT), 180–220 (AHDY…NHND), and 234–274 (RCDM…QPII).

This sequence belongs to the DPH7 family.

It carries out the reaction diphthine methyl ester-[translation elongation factor 2] + H2O = diphthine-[translation elongation factor 2] + methanol + H(+). It functions in the pathway protein modification; peptidyl-diphthamide biosynthesis. Catalyzes the demethylation of diphthine methyl ester to form diphthine, an intermediate diphthamide biosynthesis, a post-translational modification of histidine which occurs in translation elongation factor 2 (efbA). This Dictyostelium discoideum (Social amoeba) protein is Diphthine methyltransferase homolog (wdr85).